Here is a 171-residue protein sequence, read N- to C-terminus: 3-hydroxydecanoyl-[acyl-carrier-protein] dehydratase (171 aa).

Histidine 70 is an active-site residue.

It belongs to the thioester dehydratase family. FabA subfamily. Homodimer.

The protein resides in the cytoplasm. It catalyses the reaction a (3R)-hydroxyacyl-[ACP] = a (2E)-enoyl-[ACP] + H2O. The enzyme catalyses (3R)-hydroxydecanoyl-[ACP] = (2E)-decenoyl-[ACP] + H2O. The catalysed reaction is (2E)-decenoyl-[ACP] = (3Z)-decenoyl-[ACP]. It functions in the pathway lipid metabolism; fatty acid biosynthesis. In terms of biological role, necessary for the introduction of cis unsaturation into fatty acids. Catalyzes the dehydration of (3R)-3-hydroxydecanoyl-ACP to E-(2)-decenoyl-ACP and then its isomerization to Z-(3)-decenoyl-ACP. Can catalyze the dehydratase reaction for beta-hydroxyacyl-ACPs with saturated chain lengths up to 16:0, being most active on intermediate chain length. This chain is 3-hydroxydecanoyl-[acyl-carrier-protein] dehydratase, found in Xanthomonas axonopodis pv. citri (strain 306).